The chain runs to 187 residues: Orotate phosphoribosyltransferase (187 aa).

5-phospho-alpha-D-ribose 1-diphosphate-binding positions include Arg-98, Lys-99, Lys-102, His-104, and 128–136 (EDVTTTGGS). 2 residues coordinate orotate: Thr-132 and Arg-160.

This sequence belongs to the purine/pyrimidine phosphoribosyltransferase family. PyrE subfamily. Homodimer. The cofactor is Mg(2+).

The catalysed reaction is orotidine 5'-phosphate + diphosphate = orotate + 5-phospho-alpha-D-ribose 1-diphosphate. It functions in the pathway pyrimidine metabolism; UMP biosynthesis via de novo pathway; UMP from orotate: step 1/2. Catalyzes the transfer of a ribosyl phosphate group from 5-phosphoribose 1-diphosphate to orotate, leading to the formation of orotidine monophosphate (OMP). The sequence is that of Orotate phosphoribosyltransferase from Rhodopseudomonas palustris (strain TIE-1).